Here is a 440-residue protein sequence, read N- to C-terminus: Argininosuccinate lyase (440 aa).

The protein belongs to the lyase 1 family. Argininosuccinate lyase subfamily.

It localises to the cytoplasm. It carries out the reaction 2-(N(omega)-L-arginino)succinate = fumarate + L-arginine. It participates in amino-acid biosynthesis; L-arginine biosynthesis; L-arginine from L-ornithine and carbamoyl phosphate: step 3/3. The polypeptide is Argininosuccinate lyase (Clostridium botulinum (strain Okra / Type B1)).